The chain runs to 124 residues: Large ribosomal subunit protein bL12 (124 aa).

Residues A101–E115 are compositionally biased toward basic and acidic residues. Residues A101–K124 are disordered.

It belongs to the bacterial ribosomal protein bL12 family. In terms of assembly, homodimer. Part of the ribosomal stalk of the 50S ribosomal subunit. Forms a multimeric L10(L12)X complex, where L10 forms an elongated spine to which 2 to 4 L12 dimers bind in a sequential fashion. Binds GTP-bound translation factors.

Its function is as follows. Forms part of the ribosomal stalk which helps the ribosome interact with GTP-bound translation factors. Is thus essential for accurate translation. This chain is Large ribosomal subunit protein bL12, found in Hahella chejuensis (strain KCTC 2396).